Here is a 607-residue protein sequence, read N- to C-terminus: V-type proton ATPase catalytic subunit A (607 aa).

Residue 246–253 (GAFGCGKT) participates in ATP binding.

Belongs to the ATPase alpha/beta chains family. V-ATPase is a heteromultimeric enzyme composed of a peripheral catalytic V1 complex (components A to H) attached to an integral membrane V0 proton pore complex (components: a, c, c', c'', d, e, f and VOA1).

The protein localises to the vacuole membrane. It carries out the reaction ATP + H2O + 4 H(+)(in) = ADP + phosphate + 5 H(+)(out). Functionally, catalytic subunit of the V1 complex of vacuolar(H+)-ATPase (V-ATPase), a multisubunit enzyme composed of a peripheral complex (V1) that hydrolyzes ATP and a membrane integral complex (V0) that translocates protons. V-ATPase is responsible for acidifying and maintaining the pH of intracellular compartments. The sequence is that of V-type proton ATPase catalytic subunit A (vma-1) from Neurospora crassa (strain ATCC 24698 / 74-OR23-1A / CBS 708.71 / DSM 1257 / FGSC 987).